The chain runs to 281 residues: Microtubule-associated protein RP/EB family member 3 (281 aa).

One can recognise a Calponin-homology (CH) domain in the interval 14–116 (NLSRHDMLAW…FIQWFKKFFD (103 aa)). Disordered regions lie at residues 157-181 (VPQR…VAPP) and 260-281 (EGFA…QDEY). Polar residues predominate over residues 158-175 (PQRTSPTGPKNMQTSGRL). Residues S162 and S176 each carry the phosphoserine modification. Residues 194-264 (GGHEADAQIL…LYATEEGFAP (71 aa)) enclose the EB1 C-terminal domain. The APC-binding stretch occupies residues 217 to 260 (DGLEKERDFYFSKLRDIELICQEHESENSPVISGIIGILYATEE). Residues 217 to 281 (DGLEKERDFY…EHQQEDQDEY (65 aa)) form a DCTN1-binding region. Over residues 272 to 281 (EHQQEDQDEY) the composition is skewed to basic and acidic residues.

The protein belongs to the MAPRE family. As to quaternary structure, homodimer. Heterodimer with MAPRE1. Binds monomeric and polymerized GTP-bound tubulin. Interacts with DCTN1 and SRCIN1. Binds to the C-terminal domain of APC. Interacts (via C-terminus) with CLIP1. Interacts with SLAIN2. Interacts with SLAIN1. Interacts with APC2. Interacts with AKAP9. Interacts with PDE4DIP isoform 2/MMG8/SMYLE; this interaction is required for its recruitment to the Golgi apparatus.

It is found in the cytoplasm. The protein localises to the cytoskeleton. Its function is as follows. Plus-end tracking protein (+TIP) that binds to the plus-end of microtubules and regulates the dynamics of the microtubule cytoskeleton. Promotes microtubule growth. May be involved in spindle function by stabilizing microtubules and anchoring them at centrosomes. Also acts as a regulator of minus-end microtubule organization: interacts with the complex formed by AKAP9 and PDE4DIP, leading to recruit CAMSAP2 to the Golgi apparatus, thereby tethering non-centrosomal minus-end microtubules to the Golgi, an important step for polarized cell movement. Promotes elongation of CAMSAP2-decorated microtubule stretches on the minus-end of microtubules. The chain is Microtubule-associated protein RP/EB family member 3 (Mapre3) from Mus musculus (Mouse).